The following is a 709-amino-acid chain: Zinc finger CCHC domain-containing protein 8 (709 aa).

Positions 1–47 (MAAGVDFGDLELFEAFDPPEESTPKPVHTRFKDDEEEEDDDDDENGV) are disordered. Alanine 2 is subject to N-acetylalanine. Acidic residues-rich tracts occupy residues 8–20 (GDLELFEAFDPPE) and 34–46 (DEEEEDDDDDENG). Residues 48–83 (GDAELQEQLRRCEATIEQLRAENQELKRKLNILTRP) adopt a coiled-coil conformation. The segment at 230-247 (PHCFNCGSEEHQMKECPM) adopts a CCHC-type zinc-finger fold. RBM7 binding regions lie at residues 289–302 (FKPGVISEELQDAL) and 312–327 (FIYRMRQLGYPPGWLK). Disordered stretches follow at residues 409-518 (IQSP…EDAL) and 533-667 (ALQQ…DMSK). Residues 410 to 430 (QSPSMRSSGKRSSSQSSPNSP) show a composition bias toward low complexity. A compositionally biased stretch (pro residues) spans 468–499 (PPLPPGTPPPLPQGTPPPLFTPPLPKGTPPLT). 4 positions are modified to phosphothreonine: threonine 474, threonine 482, threonine 488, and threonine 495. Over residues 552-562 (LTGNSVASSPC) the composition is skewed to polar residues. A Phosphoserine modification is found at serine 601. A compositionally biased stretch (polar residues) spans 635–645 (MNMSNGSNQQP). Phosphoserine is present on residues serine 660 and serine 697. Residues 661 to 709 (PVPDMSKFATGITPFEFENMAESTGMYLRIRNLLKNSPRNQQKNKKTCE) are MTREX binding.

Belongs to the ZCCHC8 family. In terms of assembly, component of a nuclear TRAMP-like complex, an ATP-dependent exosome regulatory complex consisting of a helicase (MTREX), an oligadenylate polymerase (TENT4B or TENT4A), and a substrate specific RNA-binding factor (ZCCHC7 or ZCCHC8). Several TRAMP-like complexes exist with specific compositions and are associated with nuclear, or nucleolar RNA exosomes. Identified in the spliceosome C complex. Component of the nuclear exosome targeting (NEXT) complex composed of MTREX, ZCCHC8, and RBM7 that directs a subset of non-coding short-lived RNAs for exosomal degradation. Interacts with proteins involved in RNA processing and degradation such as MTREX and RBM7; interaction with MTREX enhances MTREX RNA helicase activity and bridges between RBM7 and MTREX. Interacts with TERC, the telomerase RNA component. Phosphorylation at Thr-495 by GSK3 is triggered in cells entering mitosis.

It localises to the nucleus. The protein localises to the nucleoplasm. Its function is as follows. Scaffolding subunit of the trimeric nuclear exosome targeting (NEXT) complex that is involved in the surveillance and turnover of aberrant transcripts and non-coding RNAs. NEXT functions as an RNA exosome cofactor that directs a subset of non-coding short-lived RNAs for exosomal degradation. May be involved in pre-mRNA splicing. It is required for 3'-end maturation of telomerase RNA component (TERC), TERC 3'-end targeting to the nuclear RNA exosome, and for telomerase function. This is Zinc finger CCHC domain-containing protein 8 (Zcchc8) from Mus musculus (Mouse).